Consider the following 479-residue polypeptide: UDP-N-acetylmuramoyl-L-alanyl-D-glutamate--2,6-diaminopimelate ligase (479 aa).

S21 contacts UDP-N-acetyl-alpha-D-muramoyl-L-alanyl-D-glutamate. 98–104 is an ATP binding site; that stretch reads GTNGKSS. UDP-N-acetyl-alpha-D-muramoyl-L-alanyl-D-glutamate-binding positions include 144–145, S171, Q177, and R179; that span reads TT. Residue K211 is modified to N6-carboxylysine. Meso-2,6-diaminopimelate is bound by residues R372, 396-399, G446, and E450; that span reads DNPR. A Meso-diaminopimelate recognition motif motif is present at residues 396 to 399; that stretch reads DNPR.

Belongs to the MurCDEF family. MurE subfamily. Mg(2+) serves as cofactor. Carboxylation is probably crucial for Mg(2+) binding and, consequently, for the gamma-phosphate positioning of ATP.

It is found in the cytoplasm. It carries out the reaction UDP-N-acetyl-alpha-D-muramoyl-L-alanyl-D-glutamate + meso-2,6-diaminopimelate + ATP = UDP-N-acetyl-alpha-D-muramoyl-L-alanyl-gamma-D-glutamyl-meso-2,6-diaminopimelate + ADP + phosphate + H(+). The protein operates within cell wall biogenesis; peptidoglycan biosynthesis. Its function is as follows. Catalyzes the addition of meso-diaminopimelic acid to the nucleotide precursor UDP-N-acetylmuramoyl-L-alanyl-D-glutamate (UMAG) in the biosynthesis of bacterial cell-wall peptidoglycan. The protein is UDP-N-acetylmuramoyl-L-alanyl-D-glutamate--2,6-diaminopimelate ligase of Rickettsia montanensis.